The following is a 136-amino-acid chain: Large ribosomal subunit protein uL16 (136 aa).

It belongs to the universal ribosomal protein uL16 family. Part of the 50S ribosomal subunit.

Functionally, binds 23S rRNA and is also seen to make contacts with the A and possibly P site tRNAs. This is Large ribosomal subunit protein uL16 from Glaesserella parasuis serovar 5 (strain SH0165) (Haemophilus parasuis).